Here is a 4555-residue protein sequence, read N- to C-terminus: Protocadherin Fat 3 (4555 aa).

The N-terminal stretch at 1–31 (MSVTMGHCMGTKPPSCIILLLLKLFATVSQG) is a signal peptide. At 32 to 4153 (LPGTGPLGFH…AGHSYVGKEE (4122 aa)) the chain is on the extracellular side. 33 Cadherin domains span residues 43–157 (THST…RPLF), 158–262 (SPTT…NEHA), 263–374 (PIIH…TPVR), 376–471 (EKDV…TPEF), 472–577 (QEAL…SPLF), 578–680 (EKVA…SKSF), 726–830 (KSFP…NPVF), 831–935 (LQDS…SPAF), 936–1042 (IPSS…TPYF), 1043–1147 (PDFA…APLT), 1148–1253 (SEPI…RPQF), 1254–1358 (PEKV…SPIP), 1362–1459 (DEPF…GPEF), 1460–1565 (SQPH…SPYF), 1566–1768 (TNPL…PPVF), 1769–1882 (LFSQ…PPVF), 1883–1985 (TQAV…TQSF), 1982–2083 (TQSF…SPVF), 2084–2185 (VGLP…MPVF), 2186–2286 (DKPF…PPVF), 2287–2393 (DQPT…PPVF), 2394–2495 (NQLI…SPAF), 2496–2599 (SQST…APQF), 2600–2707 (MTVE…LPSF), 2708–2813 (TQSQ…KPVF), 2814–2923 (ETST…APVF), 2924–3028 (AHEV…SPVC), 3029–3130 (DQVA…PPVF), 3131–3235 (SSNH…PPVF), 3236–3340 (ERRD…PPRF), 3341–3445 (SQDV…SPVF), 3446–3550 (TPAN…KPTA), and 3551–3660 (IPLE…PEDF). A glycan (N-linked (GlcNAc...) asparagine) is linked at Asn48. An N-linked (GlcNAc...) asparagine glycan is attached at Asn341. N-linked (GlcNAc...) asparagine glycans are attached at residues Asn481, Asn562, Asn667, Asn799, Asn879, Asn898, and Asn1006. 2 N-linked (GlcNAc...) asparagine glycosylation sites follow: Asn1367 and Asn1429. The N-linked (GlcNAc...) asparagine glycan is linked to Asn1751. N-linked (GlcNAc...) asparagine glycosylation is found at Asn1944, Asn1993, and Asn1996. N-linked (GlcNAc...) asparagine glycosylation is found at Asn2208, Asn2292, Asn2331, and Asn2467. A glycan (N-linked (GlcNAc...) asparagine) is linked at Asn2734. The N-linked (GlcNAc...) asparagine glycan is linked to Asn3000. N-linked (GlcNAc...) asparagine glycosylation occurs at Asn3201. Residues Asn3449, Asn3618, and Asn3741 are each glycosylated (N-linked (GlcNAc...) asparagine). The EGF-like 1 domain occupies 3794–3832 (SNDPCVEKPCPEDMQCVGYEASRRPFLCQCPPGKLGECS). 3 disulfide bridges follow: Cys3798-Cys3809, Cys3803-Cys3821, and Cys3823-Cys3831. The Laminin G-like domain occupies 3834–4017 (HTSLSFAGNS…VGLTELKLGC (184 aa)). An N-linked (GlcNAc...) asparagine glycan is attached at Asn3926. Cystine bridges form between Cys3984-Cys4017, Cys4024-Cys4035, Cys4029-Cys4045, Cys4047-Cys4056, Cys4063-Cys4074, Cys4068-Cys4083, Cys4085-Cys4094, Cys4101-Cys4112, Cys4106-Cys4121, and Cys4123-Cys4132. EGF-like domains lie at 4020–4057 (YPDA…TNCE) and 4059–4095 (EITA…VTCE). Residues 4097 to 4133 (DVDECEREECENGGSCVNLFGSFFCNCTPGYVGQYCG) form the EGF-like 4; calcium-binding domain. Residues 4154–4174 (LIGIAVVLFVIFTLIVLFIVF) form a helical membrane-spanning segment. Topologically, residues 4175–4555 (RKKVFRKNYS…FVETQQQTQV (381 aa)) are cytoplasmic. 2 disordered regions span residues 4300-4353 (IRKN…YHWD) and 4395-4474 (GGYD…LGGP). Over residues 4322-4343 (CFTNSNKGSNSEVQSLSSFQSD) the composition is skewed to polar residues. Omega-N-methylarginine occurs at positions 4508 and 4518.

Restricted to the nervous system, mainly in brain. In brain, it is highly expressed in the olfactory bulb and retina. In the developing olfactory bulb, it localizes along the dendrites of these cells as well as in their axons to some extent. In retina, it cocentrates in the inner plexiform layer throughout development (at protein level).

It localises to the membrane. In terms of biological role, may play a role in the interactions between neurites derived from specific subsets of neurons during development. This is Protocadherin Fat 3 (Fat3) from Mus musculus (Mouse).